The primary structure comprises 205 residues: Putative 3-methyladenine DNA glycosylase (205 aa).

It belongs to the DNA glycosylase MPG family.

The protein is Putative 3-methyladenine DNA glycosylase of Bacillus cereus (strain AH187).